We begin with the raw amino-acid sequence, 1060 residues long: Carbamoyl phosphate synthase large chain (1060 aa).

The segment at 1-401 is carboxyphosphate synthetic domain; sequence MPKRTDIKKI…SLLKAVRSLE (401 aa). Positions 129, 169, 175, 176, 208, 210, 215, 241, 242, 243, 284, and 298 each coordinate ATP. An ATP-grasp 1 domain is found at 133 to 327; sequence KQLMEELEQP…IAKLAAKIAV (195 aa). Residues Gln-284, Glu-298, and Asn-300 each coordinate Mg(2+). Residues Gln-284, Glu-298, and Asn-300 each contribute to the Mn(2+) site. The segment at 402–546 is oligomerization domain; that stretch reads IGAYHNELAE…YSTYEVENES (145 aa). Residues 547–929 are carbamoyl phosphate synthetic domain; the sequence is NVSKKPSVLV…ALYKAFEASG (383 aa). One can recognise an ATP-grasp 2 domain in the interval 671–861; the sequence is EQALQELAIP…MAQVATKAIL (191 aa). Arg-707, Ser-746, Leu-748, Glu-752, Gly-777, Val-778, His-779, Ser-780, Gln-820, and Glu-832 together coordinate ATP. The Mg(2+) site is built by Gln-820, Glu-832, and Asn-834. Gln-820, Glu-832, and Asn-834 together coordinate Mn(2+). Positions 930–1060 constitute an MGS-like domain; that stretch reads LHLPSYGAVL…ESRAFTTEAI (131 aa). The segment at 930–1060 is allosteric domain; that stretch reads LHLPSYGAVL…ESRAFTTEAI (131 aa).

Belongs to the CarB family. Composed of two chains; the small (or glutamine) chain promotes the hydrolysis of glutamine to ammonia, which is used by the large (or ammonia) chain to synthesize carbamoyl phosphate. Tetramer of heterodimers (alpha,beta)4. The cofactor is Mg(2+). Mn(2+) serves as cofactor.

It carries out the reaction hydrogencarbonate + L-glutamine + 2 ATP + H2O = carbamoyl phosphate + L-glutamate + 2 ADP + phosphate + 2 H(+). The catalysed reaction is hydrogencarbonate + NH4(+) + 2 ATP = carbamoyl phosphate + 2 ADP + phosphate + 2 H(+). Its pathway is amino-acid biosynthesis; L-arginine biosynthesis; carbamoyl phosphate from bicarbonate: step 1/1. It participates in pyrimidine metabolism; UMP biosynthesis via de novo pathway; (S)-dihydroorotate from bicarbonate: step 1/3. Large subunit of the glutamine-dependent carbamoyl phosphate synthetase (CPSase). CPSase catalyzes the formation of carbamoyl phosphate from the ammonia moiety of glutamine, carbonate, and phosphate donated by ATP, constituting the first step of 2 biosynthetic pathways, one leading to arginine and/or urea and the other to pyrimidine nucleotides. The large subunit (synthetase) binds the substrates ammonia (free or transferred from glutamine from the small subunit), hydrogencarbonate and ATP and carries out an ATP-coupled ligase reaction, activating hydrogencarbonate by forming carboxy phosphate which reacts with ammonia to form carbamoyl phosphate. This chain is Carbamoyl phosphate synthase large chain, found in Enterococcus faecalis (strain ATCC 700802 / V583).